Consider the following 425-residue polypeptide: Serine--tRNA ligase (425 aa).

Residue 230 to 232 (TAE) participates in L-serine binding. 261–263 (RSE) is an ATP binding site. Residue E284 coordinates L-serine. Position 348–351 (348–351 (EISS)) interacts with ATP. S384 contacts L-serine.

The protein belongs to the class-II aminoacyl-tRNA synthetase family. Type-1 seryl-tRNA synthetase subfamily. In terms of assembly, homodimer. The tRNA molecule binds across the dimer.

The protein resides in the cytoplasm. The catalysed reaction is tRNA(Ser) + L-serine + ATP = L-seryl-tRNA(Ser) + AMP + diphosphate + H(+). The enzyme catalyses tRNA(Sec) + L-serine + ATP = L-seryl-tRNA(Sec) + AMP + diphosphate + H(+). The protein operates within aminoacyl-tRNA biosynthesis; selenocysteinyl-tRNA(Sec) biosynthesis; L-seryl-tRNA(Sec) from L-serine and tRNA(Sec): step 1/1. Its function is as follows. Catalyzes the attachment of serine to tRNA(Ser). Is also able to aminoacylate tRNA(Sec) with serine, to form the misacylated tRNA L-seryl-tRNA(Sec), which will be further converted into selenocysteinyl-tRNA(Sec). This chain is Serine--tRNA ligase, found in Streptococcus thermophilus (strain ATCC BAA-491 / LMD-9).